Reading from the N-terminus, the 680-residue chain is Pilus tip adhesin Cpa (680 aa).

The isoglutamyl cysteine thioester (Cys-Gln) cross-link spans 62–211 (CFNLTKHFPS…IFQSSDKTFQ (150 aa)). Residues 217 to 236 (EYVPDTPPKPGEEPPAKTEK) form a disordered region. Basic and acidic residues predominate over residues 226–236 (PGEEPPAKTEK). Positions 243 to 546 (KYAEGDYSKL…ELIDVISMED (304 aa)) form a cross-link, isoaspartyl lysine isopeptide (Lys-Asp). The region spanning 253 to 311 (LEGATLKLAQIEGSGFQEKIFDSNKSGEKVELPNGTYVLSELKPPQGYGVATPITFKVA) is the CNA-B domain. The isoglutamyl cysteine thioester (Cys-Gln) cross-link spans 374–526 (CFNADLHSPP…FFVPNSSRYQ (153 aa)). A cross-link (isoaspartyl lysine isopeptide (Lys-Asn)) is located at residues 562–667 (KTVTGTIADK…KEDETVAFEN (106 aa)). A VPPTG sorting signal motif is present at residues 672–676 (VPPTG). A Threonyl lysine isopeptide (Thr-Lys) (interchain with K-? in major pilin subunit) cross-link involves residue Thr675. A propeptide spans 676 to 680 (GLTTD) (removed by sortase).

In terms of assembly, monomer. In terms of processing, proteolytically processed and assembled in pili through a transpeptidation reaction catalyzed by a sortase, which leads to a covalent link between Cpa and a major pilin subunit.

The protein resides in the fimbrium. Its function is as follows. Component of the pilus tip. Can bind covalently, via its two reactive thioester bonds, to molecular targets from host cell surface and can thus mediate adhesion of the streptococcal pili to host cells. Lysine side chains or a carbohydrate with a free amine group might be candidates for Cpa binding. In vitro, can covalently bind to spermidine, but it is unlikely that spermidine is the natural target of Cpa. This Streptococcus pyogenes protein is Pilus tip adhesin Cpa (cpa).